Here is a 47-residue protein sequence, read N- to C-terminus: Delta-stichotoxin-Hcr1d (47 aa).

3 disulfide bridges follow: Cys3/Cys43, Cys5/Cys33, and Cys26/Cys44.

It belongs to the sea anemone sodium channel inhibitory toxin family. Type II subfamily.

It is found in the secreted. The protein resides in the nematocyst. Functionally, binds to site 3 of voltage-gated sodium channels and inhibits the inactivation process. This Radianthus crispa (Leathery sea anemone) protein is Delta-stichotoxin-Hcr1d.